We begin with the raw amino-acid sequence, 115 residues long: Nitrogen regulatory protein P-II 1 (115 aa).

O-UMP-tyrosine is present on Tyr54.

The protein belongs to the P(II) protein family.

In terms of biological role, could be involved in the regulation of nitrogen fixation. This chain is Nitrogen regulatory protein P-II 1, found in Methanothermobacter thermautotrophicus (strain ATCC 29096 / DSM 1053 / JCM 10044 / NBRC 100330 / Delta H) (Methanobacterium thermoautotrophicum).